We begin with the raw amino-acid sequence, 288 residues long: Solute carrier family 25 member 45 (288 aa).

Solcar repeat units follow at residues 1 to 83, 97 to 191, and 199 to 286; these read MPVE…TLLA, PSYT…LCRQ, and PSSA…LLRL. The next 6 membrane-spanning stretches (helical) occupy residues 6 to 26, 58 to 78, 102 to 122, 166 to 186, 202 to 222, and 266 to 286; these read FVAG…FDTV, GMSF…GVYS, IFIA…PFDL, GSWA…VTYE, ATVL…ATPF, and SARA…LLRL.

This sequence belongs to the mitochondrial carrier (TC 2.A.29) family. As to expression, widely expressed, with highest levels in testis, liver and kidney and low levels in brain, including cortex, cerebellum, hippocampus and hypothalamus, and heart.

The protein localises to the mitochondrion inner membrane. This is Solute carrier family 25 member 45 (Slc25a45) from Mus musculus (Mouse).